Here is a 264-residue protein sequence, read N- to C-terminus: Indole-3-glycerol phosphate synthase (264 aa).

The protein belongs to the TrpC family.

It catalyses the reaction 1-(2-carboxyphenylamino)-1-deoxy-D-ribulose 5-phosphate + H(+) = (1S,2R)-1-C-(indol-3-yl)glycerol 3-phosphate + CO2 + H2O. It functions in the pathway amino-acid biosynthesis; L-tryptophan biosynthesis; L-tryptophan from chorismate: step 4/5. In Lactococcus lactis subsp. cremoris (strain MG1363), this protein is Indole-3-glycerol phosphate synthase.